The primary structure comprises 361 residues: Free fatty acid receptor 4 (361 aa).

The interval 1–21 (MSPECAQTTGPGPSRTPDQVN) is disordered. The Extracellular portion of the chain corresponds to 1-45 (MSPECAQTTGPGPSRTPDQVNRTHFPFFSDVKGDHRLVLSVLETT). N21 carries an N-linked (GlcNAc...) asparagine glycan. The chain crosses the membrane as a helical span at residues 46–66 (VLGLIFVVSLLGNVCALVLVV). At 67-77 (RRRRRGATVSL) the chain is on the cytoplasmic side. Residues 78-98 (VLNLFCADLLFTSAIPLVLVV) traverse the membrane as a helical segment. At 99 to 103 (RWTEA) the chain is on the extracellular side. Residues 104–124 (WLLGPVVCHLLFYVMTMSGSV) form a helical membrane-spanning segment. A disulfide bond links C111 and C194. Residues 125–156 (TILTLAAVSLERMVCIVRLRRGLSGPGRRTQA) are Cytoplasmic-facing. Residues 157-177 (ALLAFIWGYSALAALPLCILF) form a helical membrane-spanning segment. Topologically, residues 178–204 (RVVPQRLPGGDQEIPICTLDWPNRIGE) are extracellular. The chain crosses the membrane as a helical span at residues 205–225 (ISWDVFFVTLNFLVPGLVIVI). The Cytoplasmic segment spans residues 226–268 (SYSKILQITKASRKRLTLSLAYSESHQIRVSQQDYRLFRTLFL). Residues 269–289 (LMVSFFIMWSPIIITILLILI) form a helical membrane-spanning segment. Residues 290 to 295 (QNFRQD) lie on the Extracellular side of the membrane. Residues 296 to 316 (LVIWPSLFFWVVAFTFANSAL) traverse the membrane as a helical segment. The Cytoplasmic portion of the chain corresponds to 317 to 361 (NPILYNMSLFRSEWRKIFCCFFFPEKGAIFTETSIRRNDLSVIST). A phosphothreonine mark is found at T347 and T349. A phosphoserine mark is found at S350, S357, and S360.

This sequence belongs to the G-protein coupled receptor 1 family. As to quaternary structure, interacts (via C-terminus) with ARRB2 following LCFAs stimulation. Post-translationally, phosphorylated at two clusters of Ser and Thr residues located in the intracellular C-terminus. Prerequisite for FFAR4 internalization via an ARRB2-dependent pathway.

The protein resides in the cell membrane. Its subcellular location is the endosome membrane. It is found in the lysosome membrane. The protein localises to the cell projection. It localises to the cilium membrane. Its function is as follows. G-protein-coupled receptor for long-chain fatty acids (LCFAs) with a major role in adipogenesis, energy metabolism and inflammation. Signals via G-protein and beta-arrestin pathways. LCFAs sensing initiates activation of phosphoinositidase C-linked G proteins GNAQ and GNA11 (G(q)/G(11)), inducing a variety of cellular responses via second messenger pathways such as intracellular calcium mobilization, modulation of cyclic adenosine monophosphate (cAMP) production, and mitogen-activated protein kinases (MAPKs). After LCFAs binding, associates with beta-arrestin ARRB2 that acts as an adapter protein coupling the receptor to specific downstream signaling pathways, as well as mediating receptor endocytosis. In response to dietary fats, plays an important role in the regulation of adipocyte proliferation and differentiation. Acts as a receptor for omega-3 polyunsaturated fatty acids (PUFAs) at primary cilium of perivascular preadipocytes, initiating an adipogenic program via cAMP and CTCF-dependent chromatin remodeling that ultimately results in transcriptional activation of adipogenic genes and cell cycle entry. Induces differentiation of brown and beige adipocytes probably via autocrine and endocrine functions of FGF21 hormone. Contributes to the thermogenic activation of brown adipose tissue and the browning of white adipose tissue. Activates brown adipocytes by initiating intracellular calcium signaling leading to mitochondrial depolarization and fission, and overall increased mitochondrial respiration. Consequently stimulates fatty acid uptake and oxidation in mitochondria together with UCP1-mediated thermogenic respiration, eventually reducing fat mass. Regulates bi-potential differentiation of bone marrow mesenchymal stem cells toward osteoblasts or adipocytes likely by up-regulating distinct integrins. In response to dietary fats regulates hormone secretion and appetite. Stimulates GIP and GLP1 secretion from enteroendocrine cells as well as GCG secretion in pancreatic alpha cells, thereby playing a role in the regulation of blood glucose levels. Negatively regulates glucose-induced SST secretion in pancreatic delta cells. Mediates LCFAs inhibition of GHRL secretion, an appetite-controlling hormone. In taste buds, contributes to sensing of dietary fatty acids by the gustatory system. During the inflammatory response, promotes anti-inflammatory M2 macrophage differentiation in adipose tissue. Mediates the anti-inflammatory effects of omega-3 PUFAs via inhibition of NLRP3 inflammasome activation. In this pathway, interacts with adapter protein ARRB2 and inhibits the priming step triggered by Toll-like receptors (TLRs) at the level of TAK1 and TAB1. Further inhibits the activation step when ARRB2 directly associates with NLRP3, leading to inhibition of pro-inflammatory cytokine release. Mediates LCFAs anti-apoptotic effects. The sequence is that of Free fatty acid receptor 4 (Ffar4) from Rattus norvegicus (Rat).